Reading from the N-terminus, the 119-residue chain is Small ribosomal subunit protein uS13 (119 aa).

The segment at 94–119 (GLPVRGQRTQTNARTRKGPRRGPAGK) is disordered.

This sequence belongs to the universal ribosomal protein uS13 family. Part of the 30S ribosomal subunit. Forms a loose heterodimer with protein S19. Forms two bridges to the 50S subunit in the 70S ribosome.

Its function is as follows. Located at the top of the head of the 30S subunit, it contacts several helices of the 16S rRNA. In the 70S ribosome it contacts the 23S rRNA (bridge B1a) and protein L5 of the 50S subunit (bridge B1b), connecting the 2 subunits; these bridges are implicated in subunit movement. Contacts the tRNAs in the A and P-sites. The chain is Small ribosomal subunit protein uS13 from Alkalilimnicola ehrlichii (strain ATCC BAA-1101 / DSM 17681 / MLHE-1).